Consider the following 247-residue polypeptide: Geranylgeranylglyceryl phosphate synthase (247 aa).

Residues aspartate 23 and serine 52 each coordinate Mg(2+). Sn-glycerol 1-phosphate is bound by residues 171 to 177 (YLEAGSG), 203 to 204 (GG), and 225 to 226 (GT).

It belongs to the GGGP/HepGP synthase family. Group II subfamily. Mg(2+) serves as cofactor.

Its subcellular location is the cytoplasm. The enzyme catalyses sn-glycerol 1-phosphate + (2E,6E,10E)-geranylgeranyl diphosphate = sn-3-O-(geranylgeranyl)glycerol 1-phosphate + diphosphate. It functions in the pathway membrane lipid metabolism; glycerophospholipid metabolism. In terms of biological role, prenyltransferase that catalyzes the transfer of the geranylgeranyl moiety of geranylgeranyl diphosphate (GGPP) to the C3 hydroxyl of sn-glycerol-1-phosphate (G1P). This reaction is the first ether-bond-formation step in the biosynthesis of archaeal membrane lipids. The polypeptide is Geranylgeranylglyceryl phosphate synthase (Methanosarcina mazei (strain ATCC BAA-159 / DSM 3647 / Goe1 / Go1 / JCM 11833 / OCM 88) (Methanosarcina frisia)).